Consider the following 621-residue polypeptide: tRNA uridine 5-carboxymethylaminomethyl modification enzyme MnmG (621 aa).

Position 11-16 (G11–G16) interacts with FAD. G271 to F285 is a binding site for NAD(+).

It belongs to the MnmG family. As to quaternary structure, homodimer. Heterotetramer of two MnmE and two MnmG subunits. It depends on FAD as a cofactor.

It is found in the cytoplasm. In terms of biological role, NAD-binding protein involved in the addition of a carboxymethylaminomethyl (cmnm) group at the wobble position (U34) of certain tRNAs, forming tRNA-cmnm(5)s(2)U34. The polypeptide is tRNA uridine 5-carboxymethylaminomethyl modification enzyme MnmG (Cytophaga hutchinsonii (strain ATCC 33406 / DSM 1761 / CIP 103989 / NBRC 15051 / NCIMB 9469 / D465)).